The primary structure comprises 534 residues: Phosphoenolpyruvate carboxykinase (ATP) (534 aa).

Residues Arg59, Tyr200, and Lys206 each coordinate substrate. ATP contacts are provided by residues Lys206, His225, and 242–250; that span reads GLSGTGKTT. Mn(2+) contacts are provided by Lys206 and His225. Asp263 serves as a coordination point for Mn(2+). Residues Glu291, Arg327, 443–444, and Thr449 each bind ATP; that span reads RI. Residue Arg327 coordinates substrate.

The protein belongs to the phosphoenolpyruvate carboxykinase (ATP) family. The cofactor is Mn(2+).

The protein resides in the cytoplasm. The enzyme catalyses oxaloacetate + ATP = phosphoenolpyruvate + ADP + CO2. Its pathway is carbohydrate biosynthesis; gluconeogenesis. Involved in the gluconeogenesis. Catalyzes the conversion of oxaloacetate (OAA) to phosphoenolpyruvate (PEP) through direct phosphoryl transfer between the nucleoside triphosphate and OAA. This chain is Phosphoenolpyruvate carboxykinase (ATP), found in Agathobacter rectalis (strain ATCC 33656 / DSM 3377 / JCM 17463 / KCTC 5835 / VPI 0990) (Eubacterium rectale).